The sequence spans 494 residues: Tripartite motif-containing protein 5 (494 aa).

The residue at position 2 (Ala-2) is an N-acetylalanine. The RING-type zinc-finger motif lies at 15–59 (CPICLELLTQPLSLDCGHSFCQACLTANHKTSMPDEGERSCPVCR). A Phosphoserine modification is found at Ser-86. A B box-type zinc finger spans residues 91 to 133 (QKVDHCARHGEKLLLFCREDRKVICWLCERSQEHRGHHTFLTE). The Zn(2+) site is built by Cys-96, His-99, Cys-118, and His-124. Residues 132–241 (TEEVAQEYQM…LISDLEHRLQ (110 aa)) adopt a coiled-coil conformation. The required for interaction with GABARAP and for autophagy stretch occupies residues 186-199 (FEQLRHILDWVESN). The region spanning 282-494 (LKVMLEVLRE…VPMTLCSPSS (213 aa)) is the B30.2/SPRY domain.

It belongs to the TRIM/RBCC family. In terms of assembly, can form homodimers and homotrimers. In addition to lower-order dimerization, also exhibits a higher-order multimerization and both low- and high-order multimerizations are essential for its restriction activity. Interacts with BTBD1 and BTBD2. Interacts with PSMC4, PSMC5, PSMD7 and HSPA8/HSC70. Interacts (via B30.2/SPRY domain) with HSPA1A/B. Interacts with PSMC2, MAP3K7/TAK1, TAB2 and TAB3. Interacts with SQSTM1. Interacts with TRIM6 and TRIM34. Interacts with ULK1 (phosphorylated form), GABARAP, GABARAPL1, GABARAPL2, MAP1LC3A, MAP1LC3C and BECN1. Post-translationally, degraded in a proteasome-independent fashion in the absence of viral infection but in a proteasome-dependent fashion following exposure to restriction sensitive virus. Autoubiquitinated in a RING finger- and UBE2D2-dependent manner. Monoubiquitinated by TRIM21. Deubiquitinated by Yersinia YopJ. Ubiquitination may not lead to proteasomal degradation.

The protein localises to the cytoplasm. It is found in the nucleus. The catalysed reaction is S-ubiquitinyl-[E2 ubiquitin-conjugating enzyme]-L-cysteine + [acceptor protein]-L-lysine = [E2 ubiquitin-conjugating enzyme]-L-cysteine + N(6)-ubiquitinyl-[acceptor protein]-L-lysine.. It functions in the pathway protein modification; protein ubiquitination. Its function is as follows. Capsid-specific restriction factor that prevents infection from non-host-adapted retroviruses. Blocks viral replication early in the life cycle, after viral entry but before reverse transcription. In addition to acting as a capsid-specific restriction factor, also acts as a pattern recognition receptor that activates innate immune signaling in response to the retroviral capsid lattice. Binding to the viral capsid triggers its E3 ubiquitin ligase activity, and in concert with the heterodimeric ubiquitin conjugating enzyme complex UBE2V1-UBE2N (also known as UBC13-UEV1A complex) generates 'Lys-63'-linked polyubiquitin chains, which in turn are catalysts in the autophosphorylation of the MAP3K7/TAK1 complex (includes TAK1, TAB2, and TAB3). Activation of the MAP3K7/TAK1 complex by autophosphorylation results in the induction and expression of NF-kappa-B and MAPK-responsive inflammatory genes, thereby leading to an innate immune response in the infected cell. Plays a role in regulating autophagy through activation of autophagy regulator BECN1 by causing its dissociation from its inhibitors BCL2 and TAB2. The protein is Tripartite motif-containing protein 5 (TRIM5) of Hoolock hoolock (Western hoolock gibbon).